Here is a 427-residue protein sequence, read N- to C-terminus: uncharacterized protein (427 aa).

3 consecutive transmembrane segments (helical) span residues 10–30 (LAYL…AGFW), 43–63 (KIIS…SKLA), and 71–91 (IFEI…SFIS). Phosphothreonine is present on Thr-199. At Ser-234 the chain carries Phosphoserine. Transmembrane regions (helical) follow at residues 253–273 (NLNP…IGPL), 288–308 (FAEA…VVLG), 327–347 (LLIG…LPII), 358–378 (ILDD…PPAI), and 397–417 (ILFW…VSGA).

Belongs to the auxin efflux carrier (TC 2.A.69) family.

Its subcellular location is the membrane. This is an uncharacterized protein from Saccharomyces cerevisiae (strain ATCC 204508 / S288c) (Baker's yeast).